The primary structure comprises 326 residues: Iron-sulfur cluster assembly SufBD family protein PH0883 (326 aa).

The protein belongs to the iron-sulfur cluster assembly SufBD family.

The protein is Iron-sulfur cluster assembly SufBD family protein PH0883 of Pyrococcus horikoshii (strain ATCC 700860 / DSM 12428 / JCM 9974 / NBRC 100139 / OT-3).